The chain runs to 484 residues: MSLNNRWTVEQRYRRLEQIPQCDIEEMTLSRQQDKGFPSFHIAPKFGLLNDPNGLCYFNGEHHIFYQWTPVGPVHGMKYWYHLSTKDFIHFTDHGVGLHPDQDYDSHGVYSGGALVENNQVLLFFTGNKRDQNWNRIPTQCFATMDSDGSIEKHGVVIENEHYTEHFRDPKVWKKGDDYLMVVGAQTKTEHGSMALYQSKDLKTWQHKGPIKTKFSDLGYMWECPDFFEINGQSVMLFSPQGVSSSNPYDFKNIYSVAYIVGDQLNLESMTLENHQDILQPDYGFDFYAPQTYLDESGRRILIAWIGLPEIDTPSVTHQWAGMLSLPRELTLKDGFLVQTPLPELKSLRKEEVVFAQSHTLESTSCLIQLDLVGDGFELELSNLKGDNIVFSATEHEFMLDRRYMSHLYAEEFGGIRKAPRLDAKQTIDIYIDNSVIEIFINGGKHTMTSRFFIDDLNKVTLKGLEQARLFPLKGITGLFESAK.

Substrate contacts are provided by residues 48–51 (LLND), Q67, 110–111 (YS), 168–169 (RD), and E223. The active site involves D51.

This sequence belongs to the glycosyl hydrolase 32 family.

It is found in the cytoplasm. The catalysed reaction is Hydrolysis of terminal non-reducing beta-D-fructofuranoside residues in beta-D-fructofuranosides.. The protein operates within glycan biosynthesis; sucrose metabolism. Enables the bacterium to metabolize sucrose as a sole carbon source. The polypeptide is Sucrose-6-phosphate hydrolase (scrB) (Vibrio alginolyticus).